The following is a 395-amino-acid chain: Beta-1,4-galactosyltransferase 3 (395 aa).

The Cytoplasmic portion of the chain corresponds to 1 to 10 (MLRRLLERPC). The helical; Signal-anchor for type II membrane protein transmembrane segment at 11 to 31 (TLALLVGSQLAVMMYLSLGGF) threads the bilayer. Residues 32 to 395 (RSLSALFGRD…ANHTAPHGSH (364 aa)) lie on the Lumenal side of the membrane. N-linked (GlcNAc...) asparagine glycosylation occurs at N57. A disulfide bridge connects residues C79 and C121. Residues 132-136 (PHRAR), 171-173 (FNR), 198-199 (VD), Y228, and W260 each bind UDP-alpha-D-galactose. A disulfide bond links C192 and C211. D199 provides a ligand contact to Mn(2+). N-acetyl-D-glucosamine is bound at residue 262–265 (GEDD). H293 contributes to the Mn(2+) binding site. 293-295 (HRG) serves as a coordination point for UDP-alpha-D-galactose. R305 is a binding site for N-acetyl-D-glucosamine. N-linked (GlcNAc...) asparagine glycosylation is found at N339 and N387. Positions 341–395 (TADIGTDPRGPRAPSGPRYPPGSSQAFRQEMLQRRPPARPGPLPTANHTAPHGSH) are disordered.

The protein belongs to the glycosyltransferase 7 family. Requires Mn(2+) as cofactor.

It is found in the golgi apparatus. The protein localises to the golgi stack membrane. It carries out the reaction an N-acetyl-beta-D-glucosaminyl derivative + UDP-alpha-D-galactose = a beta-D-galactosyl-(1-&gt;4)-N-acetyl-beta-D-glucosaminyl derivative + UDP + H(+). The enzyme catalyses N-acetyl-D-glucosamine + UDP-alpha-D-galactose = beta-D-galactosyl-(1-&gt;4)-N-acetyl-D-glucosamine + UDP + H(+). It catalyses the reaction a beta-D-GlcNAc-(1-&gt;3)-beta-D-Gal-(1-&gt;4)-beta-D-Glc-(1&lt;-&gt;1)-Cer(d18:1(4E)) + UDP-alpha-D-galactose = a neolactoside nLc4Cer(d18:1(4E)) + UDP + H(+). The catalysed reaction is a beta-D-glucosylceramide + UDP-alpha-D-galactose = a beta-D-galactosyl-(1-&gt;4)-beta-D-glucosyl-(1&lt;-&gt;1)-ceramide + UDP + H(+). It carries out the reaction a neolactoside IV(3)-beta-GlcNAc-nLc4Cer + UDP-alpha-D-galactose = a neolactoside nLc6Cer + UDP + H(+). The protein operates within protein modification; protein glycosylation. Its function is as follows. Responsible for the synthesis of complex-type N-linked oligosaccharides in many glycoproteins as well as the carbohydrate moieties of glycolipids. In Cricetulus griseus (Chinese hamster), this protein is Beta-1,4-galactosyltransferase 3 (B4GALT3).